Consider the following 316-residue polypeptide: Transaldolase 1 (316 aa).

Lys131 acts as the Schiff-base intermediate with substrate in catalysis.

Belongs to the transaldolase family. Type 1 subfamily. In terms of assembly, homodimer.

The protein localises to the cytoplasm. The enzyme catalyses D-sedoheptulose 7-phosphate + D-glyceraldehyde 3-phosphate = D-erythrose 4-phosphate + beta-D-fructose 6-phosphate. Its pathway is carbohydrate degradation; pentose phosphate pathway; D-glyceraldehyde 3-phosphate and beta-D-fructose 6-phosphate from D-ribose 5-phosphate and D-xylulose 5-phosphate (non-oxidative stage): step 2/3. Its function is as follows. Transaldolase is important for the balance of metabolites in the pentose-phosphate pathway. In Pectobacterium atrosepticum (strain SCRI 1043 / ATCC BAA-672) (Erwinia carotovora subsp. atroseptica), this protein is Transaldolase 1.